The following is a 464-amino-acid chain: Soluble pyridine nucleotide transhydrogenase (464 aa).

35-44 (DSRRQVGGNC) is an FAD binding site.

It belongs to the class-I pyridine nucleotide-disulfide oxidoreductase family. FAD is required as a cofactor.

The protein resides in the cytoplasm. The enzyme catalyses NAD(+) + NADPH = NADH + NADP(+). Functionally, conversion of NADPH, generated by peripheral catabolic pathways, to NADH, which can enter the respiratory chain for energy generation. In Pseudomonas entomophila (strain L48), this protein is Soluble pyridine nucleotide transhydrogenase.